Consider the following 1470-residue polypeptide: Membrane-associated guanylate kinase, WW and PDZ domain-containing protein 3 (1470 aa).

The PDZ 1 domain maps to 18-108 (CAVSWAGPPG…PIRLKTVKPG (91 aa)). The segment at 18 to 108 (CAVSWAGPPG…PIRLKTVKPG (91 aa)) is interaction with ADRB1 and TGFA. The Guanylate kinase-like domain maps to 116-290 (RHYLSLQFQK…RSMDFRNYMM (175 aa)). 123–130 (FQKGSIDH) lines the ATP pocket. The interval 184 to 266 (TYDGNFYGTP…ETREMHSESS (83 aa)) is disordered. A compositionally biased stretch (pro residues) spans 193 to 204 (PKPPAEPSPFQP). A Phosphoserine modification is found at S236. Acidic residues predominate over residues 238–247 (LPEEEEDEDK). 2 WW domains span residues 296–329 (EPLP…DPRL) and 342–375 (GELP…NPVE). Positions 413–495 (RASLKKSTMG…NQYVNLTLCR (83 aa)) constitute a PDZ 2 domain. The segment at 413–495 (RASLKKSTMG…NQYVNLTLCR (83 aa)) is interaction with PTEN. Residues 550–575 (LLSSDRLNGPSDSNEQRASLASSGSS) are disordered. Over residues 559–575 (PSDSNEQRASLASSGSS) the composition is skewed to polar residues. A PDZ 3 domain is found at 581 to 657 (TIPLVKGPKG…GADVPLLILR (77 aa)). Phosphoserine is present on S598. Residues 665–700 (KTAKMKTDTKETSGSLETINEPTPQPMPFPPSIIRS) form a disordered region. Positions 676–686 (TSGSLETINEP) are enriched in polar residues. S702 carries the post-translational modification Phosphoserine. One can recognise a PDZ 4 domain in the interval 729-811 (DVFLRKQESG…NGHVLLTVRR (83 aa)). An interaction with ADGRB1 region spans residues 729-811 (DVFLRKQESG…NGHVLLTVRR (83 aa)). A disordered region spans residues 818–847 (KQPEDESPQAFSQSGSPRLNRTELPTRSAP). Positions 826–847 (QAFSQSGSPRLNRTELPTRSAP) are enriched in polar residues. S833 and S916 each carry phosphoserine. One can recognise a PDZ 5 domain in the interval 852–939 (DVILQRKENE…TVTLTVVAEE (88 aa)). Residues 852 to 939 (DVILQRKENE…TVTLTVVAEE (88 aa)) form an interaction with LPAR2 and GRIN2B region. Residues 939–976 (EEHHGPPSGTNSARQSPALQHRPMGQAQATHIPGDRTA) form a disordered region. Residues 946–956 (SGTNSARQSPA) show a composition bias toward polar residues. In terms of domain architecture, PDZ 6 spans 1022–1104 (PVELERGPRG…KVLLLLRPGT (83 aa)). 2 disordered regions span residues 1124–1146 (IYDE…ESHV) and 1167–1470 (DTVQ…DKQL). Residues 1175–1191 (TLNGSQPEMKYQSIQKN) are compositionally biased toward polar residues. 2 stretches are compositionally biased toward basic and acidic residues: residues 1193–1209 (SKKD…KNLL) and 1230–1263 (RHSE…KGEN). Residues 1285 to 1304 (SSSPRKQQKIGGNSLSNTEG) are compositionally biased toward polar residues. S1321 carries the phosphoserine modification. 4 stretches are compositionally biased toward basic and acidic residues: residues 1326-1340 (PEGK…KDLK), 1350-1361 (RSPEKRSSKVDE), 1377-1397 (VSEK…DKTG), and 1422-1431 (EVTDRGKERA).

The protein belongs to the MAGUK family. In terms of assembly, interacts with ADRB1, ADGRB1, LPAR2/EDG4, FZD4, FZD7, GRIN2B, TGFA and VANGL2. Interacts with PTEN. Interacts with ADRB1, PTPRB and unidentified tyrosine phosphorylated proteins. Interacts with DLL1. Interacts with PRRG4 (via cytoplasmic domain).

It is found in the cell membrane. It localises to the cell junction. The protein localises to the tight junction. Its subcellular location is the nucleus. Acts as a scaffolding protein at cell-cell junctions, thereby regulating various cellular and signaling processes. Cooperates with PTEN to modulate the kinase activity of AKT1. Its interaction with PTPRB and tyrosine phosphorylated proteins suggests that it may link receptor tyrosine phosphatase with its substrates at the plasma membrane. In polarized epithelial cells, involved in efficient trafficking of TGFA to the cell surface. Regulates the ability of LPAR2 to activate ERK and RhoA pathways. Regulates the JNK signaling cascade via its interaction with FZD4 and VANGL2. This chain is Membrane-associated guanylate kinase, WW and PDZ domain-containing protein 3 (Magi3), found in Rattus norvegicus (Rat).